A 405-amino-acid chain; its full sequence is 4-hydroxy-3-methylbut-2-en-1-yl diphosphate synthase (flavodoxin) (405 aa).

Residues cysteine 297, cysteine 300, cysteine 343, and glutamate 350 each coordinate [4Fe-4S] cluster.

Belongs to the IspG family. Requires [4Fe-4S] cluster as cofactor.

It catalyses the reaction (2E)-4-hydroxy-3-methylbut-2-enyl diphosphate + oxidized [flavodoxin] + H2O + 2 H(+) = 2-C-methyl-D-erythritol 2,4-cyclic diphosphate + reduced [flavodoxin]. It participates in isoprenoid biosynthesis; isopentenyl diphosphate biosynthesis via DXP pathway; isopentenyl diphosphate from 1-deoxy-D-xylulose 5-phosphate: step 5/6. Converts 2C-methyl-D-erythritol 2,4-cyclodiphosphate (ME-2,4cPP) into 1-hydroxy-2-methyl-2-(E)-butenyl 4-diphosphate. The polypeptide is 4-hydroxy-3-methylbut-2-en-1-yl diphosphate synthase (flavodoxin) (Francisella tularensis subsp. mediasiatica (strain FSC147)).